The following is a 274-amino-acid chain: Reaction center protein L chain (274 aa).

Residues 2–32 (ALLSFERKYRVRGGTLIGGDLFDFWVGPYFV) are Cytoplasmic-facing. A helical transmembrane segment spans residues 33-53 (GFFGVSAIFFIFLGVSLIGYA). The Periplasmic portion of the chain corresponds to 54-83 (ASQGPTWDPFAISINPPDLKYGLGAAPLLE). The chain crosses the membrane as a helical span at residues 84–111 (GGFWQAITVCALGAFISWMLREVEISRK). Residues 112–115 (LGIG) are Cytoplasmic-facing. A helical transmembrane segment spans residues 116-139 (WHVPLAFCVPIFMFCVLQVFRPLL). The Periplasmic segment spans residues 140–170 (LGSWGHAFPYGILSHLDWVNNFGYQYLNWHY). Residues histidine 154 and histidine 174 each contribute to the (7R,8Z)-bacteriochlorophyll b site. The chain crosses the membrane as a helical span at residues 171 to 198 (NPGHMSSVSFLFVNAMALGLHGGLILSV). Histidine 191 lines the Fe cation pocket. The Cytoplasmic portion of the chain corresponds to 199–225 (ANPGDGDKVKTAEHENQYFRDVVGYSI). Phenylalanine 217 contributes to the a ubiquinone binding site. Residues 226 to 249 (GALSIHRLGLFLASNIFLTGAFGT) form a helical membrane-spanning segment. Position 231 (histidine 231) interacts with Fe cation. Residues 250–274 (IASGPFWTRGWPEWWGWWLDIPFWS) are Periplasmic-facing.

This sequence belongs to the reaction center PufL/M/PsbA/D family. As to quaternary structure, reaction center is composed of four bacteriochlorophylls, two bacteriopheophytins, two ubiquinones, one iron, and three highly hydrophobic polypeptide chains (designated L, M, and H).

The protein localises to the cellular chromatophore membrane. In terms of biological role, the reaction center is a membrane-bound complex that mediates the initial photochemical event in the electron transfer process of photosynthesis. In Blastochloris viridis (Rhodopseudomonas viridis), this protein is Reaction center protein L chain (pufL).